The following is a 128-amino-acid chain: UPF0325 protein PMI2289 (128 aa).

It belongs to the UPF0325 family.

This Proteus mirabilis (strain HI4320) protein is UPF0325 protein PMI2289.